A 263-amino-acid polypeptide reads, in one-letter code: Aquaglyceroporin (263 aa).

The disordered stretch occupies residues 1-22; sequence MDQFVFSGGSEGGGELGGDRER. 6 helical membrane-spanning segments follow: residues 41-61, 64-84, 113-133, 157-177, 180-200, and 222-242; these read KYFC…FGLA, GGAQ…ITLF, LCYV…GYGI, VIPT…YGVM, LTVP…GATM, and VAAL…AFLG.

This sequence belongs to the MIP/aquaporin (TC 1.A.8) family. As to quaternary structure, multimer.

The protein localises to the vacuole membrane. It carries out the reaction H2O(in) = H2O(out). The catalysed reaction is glycerol(in) = glycerol(out). It catalyses the reaction urea(in) = urea(out). Functionally, mediates water and glycerol transport across cell membranes. Permeable to selected sugar alcohols of up to five carbons and urea. Permeable to methylamine/methylammonium. This is Aquaglyceroporin from Toxoplasma gondii (strain ATCC 50611 / Me49).